The chain runs to 169 residues: Menaquinol:cytochrome c reductase iron-sulfur subunit (169 aa).

The 99-residue stretch at 62-160 (EPKRFDFKVK…FEVKDGKLYL (99 aa)) folds into the Rieske domain. Positions 102, 104, 123, and 126 each coordinate [2Fe-2S] cluster. Cysteines 107 and 125 form a disulfide.

It belongs to the Rieske iron-sulfur protein family. In terms of assembly, the main subunits of the menaquinol:cytochrome c complex are a Rieske-type iron-sulfur protein (QcrA), a cytochrome b (QcrB) and a cytochrome c (QcrC). [2Fe-2S] cluster is required as a cofactor.

Its function is as follows. Component of the menaquinol:cytochrome c reductase complex. The Rieske protein is a high potential 2Fe-2S protein. The protein is Menaquinol:cytochrome c reductase iron-sulfur subunit (qcrA) of Geobacillus thermodenitrificans.